Reading from the N-terminus, the 447-residue chain is Signal recognition particle 54 kDa protein (447 aa).

GTP-binding positions include 103 to 110, 185 to 189, and 245 to 248; these read GVQGSGKT, DTAGR, and TKMD.

This sequence belongs to the GTP-binding SRP family. SRP54 subfamily. As to quaternary structure, part of the signal recognition particle protein translocation system, which is composed of SRP and FtsY. Archaeal SRP consists of a 7S RNA molecule of 300 nucleotides and two protein subunits: SRP54 and SRP19.

The protein localises to the cytoplasm. The enzyme catalyses GTP + H2O = GDP + phosphate + H(+). Its function is as follows. Involved in targeting and insertion of nascent membrane proteins into the cytoplasmic membrane. Binds to the hydrophobic signal sequence of the ribosome-nascent chain (RNC) as it emerges from the ribosomes. The SRP-RNC complex is then targeted to the cytoplasmic membrane where it interacts with the SRP receptor FtsY. The polypeptide is Signal recognition particle 54 kDa protein (Saccharolobus solfataricus (strain ATCC 35092 / DSM 1617 / JCM 11322 / P2) (Sulfolobus solfataricus)).